The primary structure comprises 135 residues: UPF0225 protein CV_3559 (135 aa).

This sequence belongs to the UPF0225 family.

In Chromobacterium violaceum (strain ATCC 12472 / DSM 30191 / JCM 1249 / CCUG 213 / NBRC 12614 / NCIMB 9131 / NCTC 9757 / MK), this protein is UPF0225 protein CV_3559.